The following is a 177-amino-acid chain: CRIB domain-containing protein RIC8 (177 aa).

Residues 17-30 (IGTPTDVKHVAHIG) enclose the CRIB domain. The segment covering 72 to 89 (STRSRDIPRLPKSSRERS) has biased composition (basic and acidic residues). The segment at 72–177 (STRSRDIPRL…SSTSDAGYLT (106 aa)) is disordered. A compositionally biased stretch (low complexity) spans 158–171 (GSQVESISDSSSTS).

Functionally, functions as a downstream effector of Rho-related GTP binding proteins of the 'Rho of Plants' (ROPs) family. Participates in the propagation of ROP GTPase signals in specific cellular responses. The polypeptide is CRIB domain-containing protein RIC8 (RIC8) (Arabidopsis thaliana (Mouse-ear cress)).